Here is a 298-residue protein sequence, read N- to C-terminus: UPF0282 protein Kcr_0286 (298 aa).

It belongs to the UPF0282 family.

The chain is UPF0282 protein Kcr_0286 from Korarchaeum cryptofilum (strain OPF8).